Consider the following 98-residue polypeptide: NADH-ubiquinone oxidoreductase chain 4L (98 aa).

The next 3 helical transmembrane spans lie at 1 to 21 (MSLVYMNIMTAFMVSLAGLLM), 29 to 49 (SLLCLEGMMLSLFVLATLTIL), and 61 to 81 (IILLVFAACEAALGLSLLVMV).

It belongs to the complex I subunit 4L family. Core subunit of respiratory chain NADH dehydrogenase (Complex I) which is composed of 45 different subunits.

The protein resides in the mitochondrion inner membrane. The enzyme catalyses a ubiquinone + NADH + 5 H(+)(in) = a ubiquinol + NAD(+) + 4 H(+)(out). Its function is as follows. Core subunit of the mitochondrial membrane respiratory chain NADH dehydrogenase (Complex I) which catalyzes electron transfer from NADH through the respiratory chain, using ubiquinone as an electron acceptor. Part of the enzyme membrane arm which is embedded in the lipid bilayer and involved in proton translocation. In Muntiacus feae (Fea's muntjac), this protein is NADH-ubiquinone oxidoreductase chain 4L (MT-ND4L).